The following is a 784-amino-acid chain: Protein DBF4 homolog B (784 aa).

In terms of domain architecture, BRCT spans 27 to 117; it reads CREITFAGKS…SRGKQLLKKV (91 aa). The tract at residues 222 to 243 is disordered; it reads TVKKKDPGDQEEEEGQRSQKPQ. Residues 244–293 form a DBF4-type zinc finger; sequence ARKRKGYCECCEETFDTLSEHLVGEHHFRFVSNPLSYKMIDDLAAQLTCD. The Zn(2+) site is built by cysteine 251, cysteine 254, histidine 264, and histidine 270. Disordered regions lie at residues 299–332, 348–368, and 495–529; these read FGSP…GNEG, HADC…AEEP, and TVGS…AQPA. Polar residues predominate over residues 498-507; the sequence is SQGDVTSHSA.

As to quaternary structure, forms a complex with cdc7. In terms of processing, phosphorylated. Stably phosphorylated throughout the cell cycle.

It localises to the nucleus. In terms of biological role, regulatory subunit for cdc7 which activates its kinase activity thereby playing a central role in DNA replication and cell proliferation. Specifically required during the initiation of DNA replication in egg and during early embryonic development. The complex cdc7-dbf4b phosphorylates mcm2 and mcm4 subunits and is required for cdc45 loading. This is Protein DBF4 homolog B (dbf4b) from Xenopus laevis (African clawed frog).